The primary structure comprises 142 residues: Large ribosomal subunit protein uL11 (142 aa).

This sequence belongs to the universal ribosomal protein uL11 family. As to quaternary structure, part of the ribosomal stalk of the 50S ribosomal subunit. Interacts with L10 and the large rRNA to form the base of the stalk. L10 forms an elongated spine to which L12 dimers bind in a sequential fashion forming a multimeric L10(L12)X complex. One or more lysine residues are methylated.

Forms part of the ribosomal stalk which helps the ribosome interact with GTP-bound translation factors. This chain is Large ribosomal subunit protein uL11, found in Cronobacter sakazakii (strain ATCC BAA-894) (Enterobacter sakazakii).